The sequence spans 363 residues: Probable protein phosphatase 2C member 13, mitochondrial (363 aa).

The transit peptide at 1–59 (MVCFASLRRALPLLLRATTTTTPRFLLPRALSGGVGGGAAVDARALLRGHSGWRGLRVA) directs the protein to the mitochondrion. Residues 111-357 (KCGYSSFRGK…DNITCIVVQF (247 aa)) enclose the PPM-type phosphatase domain. Mn(2+)-binding residues include Asp147, Gly148, Asp309, and Asp348.

Belongs to the PP2C family. Mg(2+) is required as a cofactor. Requires Mn(2+) as cofactor. Highly expressed in mature pollen grains.

The protein resides in the mitochondrion. It carries out the reaction O-phospho-L-seryl-[protein] + H2O = L-seryl-[protein] + phosphate. It catalyses the reaction O-phospho-L-threonyl-[protein] + H2O = L-threonyl-[protein] + phosphate. Functionally, probable protein phosphatase that may play a role as a mitochondrial signal transduction mediator in pollen germination. May function in retrograde signaling from the mitochondria to the nucleus. May be a downstream factor of cytoplasmic male sterility (CMS). CMS is caused by genetic incompatibility between nuclei and mitochondria within male reproductive organs. The sequence is that of Probable protein phosphatase 2C member 13, mitochondrial from Oryza sativa subsp. japonica (Rice).